The following is a 237-amino-acid chain: Ribose-5-phosphate isomerase A (237 aa).

Residues 30 to 33 (SGST), 87 to 90 (DGAD), and 100 to 103 (KGGG) each bind substrate. Residue E109 is the Proton acceptor of the active site. Position 127 (K127) interacts with substrate.

This sequence belongs to the ribose 5-phosphate isomerase family. Homodimer.

The enzyme catalyses aldehydo-D-ribose 5-phosphate = D-ribulose 5-phosphate. It functions in the pathway carbohydrate degradation; pentose phosphate pathway; D-ribose 5-phosphate from D-ribulose 5-phosphate (non-oxidative stage): step 1/1. Functionally, catalyzes the reversible conversion of ribose-5-phosphate to ribulose 5-phosphate. This is Ribose-5-phosphate isomerase A from Synechococcus sp. (strain RCC307).